The sequence spans 192 residues: Probable nicotinate-nucleotide adenylyltransferase (192 aa).

It belongs to the NadD family.

It carries out the reaction nicotinate beta-D-ribonucleotide + ATP + H(+) = deamido-NAD(+) + diphosphate. It functions in the pathway cofactor biosynthesis; NAD(+) biosynthesis; deamido-NAD(+) from nicotinate D-ribonucleotide: step 1/1. Its function is as follows. Catalyzes the reversible adenylation of nicotinate mononucleotide (NaMN) to nicotinic acid adenine dinucleotide (NaAD). The chain is Probable nicotinate-nucleotide adenylyltransferase from Bradyrhizobium sp. (strain BTAi1 / ATCC BAA-1182).